Here is a 235-residue protein sequence, read N- to C-terminus: Phosphoribosylaminoimidazole-succinocarboxamide synthase (235 aa).

This sequence belongs to the SAICAR synthetase family.

It catalyses the reaction 5-amino-1-(5-phospho-D-ribosyl)imidazole-4-carboxylate + L-aspartate + ATP = (2S)-2-[5-amino-1-(5-phospho-beta-D-ribosyl)imidazole-4-carboxamido]succinate + ADP + phosphate + 2 H(+). The protein operates within purine metabolism; IMP biosynthesis via de novo pathway; 5-amino-1-(5-phospho-D-ribosyl)imidazole-4-carboxamide from 5-amino-1-(5-phospho-D-ribosyl)imidazole-4-carboxylate: step 1/2. The chain is Phosphoribosylaminoimidazole-succinocarboxamide synthase from Exiguobacterium sibiricum (strain DSM 17290 / CCUG 55495 / CIP 109462 / JCM 13490 / 255-15).